A 206-amino-acid chain; its full sequence is Protein GrpE (206 aa).

This sequence belongs to the GrpE family. Homodimer.

The protein resides in the cytoplasm. Its function is as follows. Participates actively in the response to hyperosmotic and heat shock by preventing the aggregation of stress-denatured proteins, in association with DnaK and GrpE. It is the nucleotide exchange factor for DnaK and may function as a thermosensor. Unfolded proteins bind initially to DnaJ; upon interaction with the DnaJ-bound protein, DnaK hydrolyzes its bound ATP, resulting in the formation of a stable complex. GrpE releases ADP from DnaK; ATP binding to DnaK triggers the release of the substrate protein, thus completing the reaction cycle. Several rounds of ATP-dependent interactions between DnaJ, DnaK and GrpE are required for fully efficient folding. This Shewanella baltica (strain OS223) protein is Protein GrpE.